A 1651-amino-acid chain; its full sequence is A.superbus venom factor 2 (1651 aa).

An N-terminal signal peptide occupies residues 1–22 (MEGMALYLVAALLIGFPGSSHG). N-linked (GlcNAc...) asparagine glycosylation is present at Asn-189. The Mg(2+) site is built by Pro-519, Asp-542, Val-543, and Asp-545. Intrachain disulfides connect Cys-547–Cys-808, Cys-616–Cys-651, Cys-684–Cys-711, Cys-685–Cys-718, Cys-698–Cys-719, Cys-864–Cys-1501, Cys-1346–Cys-1477, Cys-1377–Cys-1446, Cys-1494–Cys-1499, Cys-1506–Cys-1578, Cys-1525–Cys-1649, and Cys-1625–Cys-1634. Residues 657–739 (RRRRSSVLLL…QRESELFLAR (83 aa)) constitute a propeptide that is removed on maturation. The interval 661–739 (SSVLLLDSKA…QRESELFLAR (79 aa)) is C3a-like domain. The Anaphylatoxin-like domain maps to 684–719 (CCEDGMHENPMGYTCEKRAKYTQEGDACKAAFLECC). Residues 743 to 754 (EDEFFEEDNIIS) form a factor B binding site region. The propeptide occupies 992–1269 (HLIITPSGSG…VMVFQALAEY (278 aa)). The C3d-like domain stretch occupies residues 992–1269 (HLIITPSGSG…VMVFQALAEY (278 aa)). The interval 1197-1259 (VLMAASTGRD…GGTYGQTQAT (63 aa)) is factor H binding site. Asn-1282 and Asn-1352 each carry an N-linked (GlcNAc...) asparagine glycan. In terms of domain architecture, NTR spans 1506–1649 (CSLLNQQKKI…LSNTLTIFGC (144 aa)).

Belongs to the venom complement C3 homolog family. In terms of assembly, heterotrimer of alpha, beta and gamma chains; disulfide-linked. Is active with factor B in the presence of factor D. First processed by the removal of 4 Arg residues by furin-type protease, forming two chains, alpha and gamma/beta precursor, linked by a disulfide bond. This mature AVF is composed of three chains: alpha, gamma and beta. Expressed by the venom gland.

Its subcellular location is the secreted. Its function is as follows. Complement-activating protein in snake venom. It is a structural and functional analog of complement component C3b, the activated form of C3. It binds factor B (CFB), which is subsequently cleaved by factor D (CFD) to form the bimolecular complex AVF/Bb. AVF/Bb is a C3 convertase that cleaves complement component C3, but not C5 (as do CVF/Bb). This is A.superbus venom factor 2 from Austrelaps superbus (Lowland copperhead snake).